The chain runs to 125 residues: Small ribosomal subunit protein uS13 (125 aa).

Residues 92-125 (RRSLPARGQRTRTNARTRKGKRKTVAGKKKAGKK) are disordered.

Belongs to the universal ribosomal protein uS13 family. In terms of assembly, part of the 30S ribosomal subunit. Forms a loose heterodimer with protein S19. Forms two bridges to the 50S subunit in the 70S ribosome.

In terms of biological role, located at the top of the head of the 30S subunit, it contacts several helices of the 16S rRNA. In the 70S ribosome it contacts the 23S rRNA (bridge B1a) and protein L5 of the 50S subunit (bridge B1b), connecting the 2 subunits; these bridges are implicated in subunit movement. Contacts the tRNAs in the A and P-sites. The protein is Small ribosomal subunit protein uS13 of Chlorobaculum parvum (strain DSM 263 / NCIMB 8327) (Chlorobium vibrioforme subsp. thiosulfatophilum).